The sequence spans 294 residues: ATP synthase gamma chain (294 aa).

Belongs to the ATPase gamma chain family. In terms of assembly, F-type ATPases have 2 components, CF(1) - the catalytic core - and CF(0) - the membrane proton channel. CF(1) has five subunits: alpha(3), beta(3), gamma(1), delta(1), epsilon(1). CF(0) has three main subunits: a, b and c.

It is found in the cell inner membrane. Its function is as follows. Produces ATP from ADP in the presence of a proton gradient across the membrane. The gamma chain is believed to be important in regulating ATPase activity and the flow of protons through the CF(0) complex. The protein is ATP synthase gamma chain of Rhizobium rhizogenes (strain K84 / ATCC BAA-868) (Agrobacterium radiobacter).